We begin with the raw amino-acid sequence, 697 residues long: Sodium-dependent phosphate transport protein 2B (697 aa).

The tract at residues 1-45 (MAPWPELENAQPNPGKFIEGASGPQSSIPAKDKEASKTNDNGTPV) is disordered. Residues 1–91 (MAPWPELENA…WSERDTKGKT (91 aa)) are Cytoplasmic-facing. Residues 92–112 (LCIFQGVGKFILLLGFLYLFV) form a helical membrane-spanning segment. Residues 113–136 (CSLDVLSSAFQLVGGKVAGQFFSN) are Extracellular-facing. A helical transmembrane segment spans residues 137–157 (NSIMSNPVAGLVIGVLVTVMV). Topologically, residues 158 to 213 (QSSSTSSSIIVSMVASSLLTVRAAIPIIMGANIGTSITNTIVALMQAGDRNEFRRA) are cytoplasmic. The chain crosses the membrane as a helical span at residues 214 to 234 (FAGATVHDFFNWLSVFVLLPL). At 235 to 363 (EAATHYLEIL…FVNFSLPDLA (129 aa)) the chain is on the extracellular side. Residues N295, N308, N321, and N356 are each glycosylated (N-linked (GlcNAc...) asparagine). An intrachain disulfide couples C303 to C350. The helical transmembrane segment at 364–384 (VGIILLTVSLVVLCGCLIMIV) threads the bilayer. Residues 385–408 (KLLGSVLRGQVATVIKKTLNTDFP) are Cytoplasmic-facing. Residues 409–429 (FPFAWLTGYLAILVGAGMTFI) form a helical membrane-spanning segment. The Extracellular portion of the chain corresponds to 430–486 (VQSSSVFTSAMTPLIGIGVISIERAYPLTLGSNIGTTTTAILAALASPGNTLRSSLQ). Residues 487–507 (IALCHFFFNISGILLWYPIPF) traverse the membrane as a helical segment. The Cytoplasmic portion of the chain corresponds to 508 to 526 (TRLPIRLAKGLGNISAKYR). A helical transmembrane segment spans residues 527-547 (WFAVFYLIFFFFVTPLTVFGL). Residues 548 to 551 (SLAG) are Extracellular-facing. The helical transmembrane segment at 552–572 (WPVLVGVGVPIILLLLLVLCL) threads the bilayer. Over 573-696 (RMLQFRCPRI…SMKALSNTTV (124 aa)) the chain is Cytoplasmic.

Belongs to the SLC34A transporter family. Highly abundant in the ileum of small intestine, whereas it is almost absent in the duodenum and in the jejunum.

The protein resides in the apical cell membrane. The enzyme catalyses 3 Na(+)(out) + phosphate(out) = 3 Na(+)(in) + phosphate(in). Involved in actively transporting phosphate into cells via Na(+) cotransport. This Mus musculus (Mouse) protein is Sodium-dependent phosphate transport protein 2B (Slc34a2).